Consider the following 432-residue polypeptide: Adenylosuccinate synthetase (432 aa).

GTP-binding positions include 11-17 (GDEGKGK) and 39-41 (GHT). Residue D12 is the Proton acceptor of the active site. Mg(2+)-binding residues include D12 and G39. IMP contacts are provided by residues 12–15 (DEGK), 37–40 (NAGH), T134, R148, N230, T245, and R309. Residue H40 is the Proton donor of the active site. A substrate-binding site is contributed by 305–311 (VTTGRKR). GTP-binding positions include R311, 337–339 (KLD), and 419–421 (GTG).

This sequence belongs to the adenylosuccinate synthetase family. Homodimer. Mg(2+) is required as a cofactor.

The protein resides in the cytoplasm. The catalysed reaction is IMP + L-aspartate + GTP = N(6)-(1,2-dicarboxyethyl)-AMP + GDP + phosphate + 2 H(+). Its pathway is purine metabolism; AMP biosynthesis via de novo pathway; AMP from IMP: step 1/2. Plays an important role in the de novo pathway and in the salvage pathway of purine nucleotide biosynthesis. Catalyzes the first committed step in the biosynthesis of AMP from IMP. This Vanderwaltozyma polyspora (strain ATCC 22028 / DSM 70294 / BCRC 21397 / CBS 2163 / NBRC 10782 / NRRL Y-8283 / UCD 57-17) (Kluyveromyces polysporus) protein is Adenylosuccinate synthetase.